The following is a 526-amino-acid chain: Cell adhesion molecule CEACAM1 (526 aa).

An N-terminal signal peptide occupies residues 1-34; the sequence is MGHLSAPLHRVRVPWQGLLLTASLLTFWNPPTTA. At glutamine 35 the chain carries Pyrrolidone carboxylic acid. Residues 35-142 form the Ig-like V-type domain; sequence QLTTESMPFN…EATGQFHVYP (108 aa). Topologically, residues 35 to 428 are extracellular; it reads QLTTESMPFN…LPQENGLSPG (394 aa). The required for homophilic binding stretch occupies residues 39–142; that stretch reads ESMPFNVAEG…EATGQFHVYP (104 aa). N-linked (GlcNAc...) asparagine glycans are attached at residues asparagine 104, asparagine 111, asparagine 115, asparagine 152, asparagine 182, asparagine 197, asparagine 208, asparagine 224, asparagine 232, asparagine 254, asparagine 274, asparagine 288, asparagine 292, asparagine 302, asparagine 309, asparagine 345, asparagine 351, asparagine 363, asparagine 378, and asparagine 405. Ig-like C2-type domains lie at 145–232, 237–317, and 323–413; these read PKPS…VTLN, PDTP…KTII, and PVVA…IMLN. A disulfide bond links cysteine 167 and cysteine 215. An intrachain disulfide couples cysteine 259 to cysteine 299. The cysteines at positions 348 and 396 are disulfide-linked. The chain crosses the membrane as a helical span at residues 429–452; the sequence is AIAGIVIGVVALVALIAVALACFL. The interval 450–462 is interaction with calmodulin; sequence CFLHFGKTGRASD. The interaction with FLNA stretch occupies residues 452-526; sequence LHFGKTGRAS…EIIYSEVKKQ (75 aa). The Cytoplasmic segment spans residues 453 to 526; sequence HFGKTGRASD…EIIYSEVKKQ (74 aa). Positions 461–482 are enriched in basic and acidic residues; sequence SDQRDLTEHKPSVSNHTQDHSN. The segment at 461–513 is disordered; it reads SDQRDLTEHKPSVSNHTQDHSNDPPNKMNEVTYSTLNFEAQQPTQPTSASPSL. Polar residues predominate over residues 489–513; the sequence is NEVTYSTLNFEAQQPTQPTSASPSL. Positions 489 to 526 are required for interaction with PTPN11 and PTPN6 and for control of phosphorylation level; it reads NEVTYSTLNFEAQQPTQPTSASPSLTATEIIYSEVKKQ. Tyrosine 493 is subject to Phosphotyrosine; by SRC, LCK, INSR and EGFR. Serine 508 bears the Phosphoserine mark. The residue at position 520 (tyrosine 520) is a Phosphotyrosine; by INSR, SRC and LCK. The segment at 520–523 is essential for interaction with PTPN11 and PTPN6; it reads YSEV.

The protein belongs to the immunoglobulin superfamily. CEA family. Monomer. Oligomer. Heterodimer. Homodimer. Cis-dimer/oligomer (via Ig-like C2-type and/or via cytoplasmic domains); induced by trans-homophilic cell adhesion through an allosteric mechanism transmitted by the Ig-like V-type domain, and is regulated by intracellular calcium and calmodulin. Interacts (via cytoplasmic domain) with calmodulin in a calcium dependent manner; reduces homophilic cell adhesion through dissociation of dimer. Isoform 1 interacts (via cytoplasmic domain) with PTPN11 (preferentially) and PTPN6; cis-homodimer form is preferred; this interaction is decreased by formation of Isoform 1 /Isoform 8 cis-heterodimers and is dependent on the monomer/dimer equilibrium; this interaction is phosphorylation-dependent. Isoform 1 interacts with LYN. Isoform 1 interacts (via cytoplasmic domain) with SRC (via SH2 domain); this interaction is regulated by trans-homophilic cell adhesion. Isoform 1 interacts (via cytoplasmic domain) with LCK; mediates phosphorylation at Tyr-493 and Tyr-520 resulting in PTPN6 association. Isoform 1 interacts with PTPN6; this interaction is phosphorylation-dependent and causes a profound decrease in TCR stimulation-induced CD247 and ZAP70 phosphorylation. Isoform 1 interacts with TCR/CD3 complex through TCR beta chain and CD3E; colocalizes at the cell surface and upon stimulation of the TCR/CD3 complex recruits PTPN6 in the TCR/CD3 complex, resulting in dephosphorylation of CD247 and ZAP70. Isoform 1 interacts (via cytoplasmic domain) with SHC1 (via SH2 domain); SHC1 mediates interaction with INSR or EGFR in a Ser-508 phosphorylation-dependent manner. Isoform 1 interacts with EGFR; the interaction is indirect. Isoform 1 interacts with CSF3R; down-regulates the CSF3R-STAT3 pathway through recruitment of PTPN6 that dephosphorylates CSF3R. Isoform 1 (phosphorylated form) interacts with TLR4 and SYK; recruits PTPN6 that dephosphorylates SYK, reducing the production of reactive oxygen species (ROS) and lysosome disruption, leading to a reduction of the inflammasome activity. Isoform 1 interacts with FLNA; inhibits cell migration and cell scattering by interfering with the interaction of FLNA with RALA. Isoform 1 interacts (via cytoplasmic domain) with PXN; the interaction is phosphotyrosyl-dependent. Isoform 1 interacts with KLRK1; recruits PTPN6 that dephosphorylates VAV1. Isoform 1 interacts with CEACAM8. Isoform 1 interacts with FASN; this interaction is insulin and phosphorylation-dependent; reduces fatty-acid synthase activity. Interacts (via Ig-like V-type) with HAVCR2 (via Ig-like V-type); facilitates the maturation and cell surface expression of HAVCR2 thereby regulating T cell tolerance induction. Isoform 8 interacts (via the cytoplasmic domain) with ANXA2; this interaction is regulated by phosphorylation and appears in the AIIt complex. Interacts (via Lewis X moieties) with CD209 (via C-type lectin domain); this interaction is regulated by the glycosylation pattern of CEACAM1 on cell types and regulates contact between dendritic cells and neutrophils. Post-translationally, phosphorylated on serine and tyrosine. Isoform 1 is phosphorylated on tyrosine by Src family kinases like SRC and LCK and by receptor like CSF3R, EGFR and INSR upon stimulation. Phosphorylated at Ser-508; mediates activity. Phosphorylated at Tyr-493; regulates activity. Phosphorylated at Tyr-493 by EGFR and INSR upon stimulation; this phosphorylation is Ser-508-phosphorylation-dependent; mediates cellular internalization; increases interaction with downstream proteins like SHC1 and FASN. Phosphorylated at Tyr-493 and Tyr-520 by LCK; mediates PTPN6 association and is regulated by homophilic ligation of CEACAM1 in the absence of T cell activation. Phosphorylated at Tyr-520; mediates interaction with PTPN11. In terms of processing, phosphorylated on serine and threonine. As to expression, expressed in columnar epithelial cells of the colon (at protein level). The predominant forms expressed by T cells are those containing a long cytoplasmic domain. Expressed in granulocytes and lymphocytes. Leukocytes only express isoforms 6 and isoform 1.

It localises to the cell membrane. It is found in the lateral cell membrane. The protein resides in the apical cell membrane. Its subcellular location is the basal cell membrane. The protein localises to the cell junction. It localises to the adherens junction. It is found in the secreted. The protein resides in the cytoplasmic vesicle. Its subcellular location is the secretory vesicle membrane. The protein localises to the cell projection. It localises to the microvillus membrane. Cell adhesion protein that mediates homophilic cell adhesion in a calcium-independent manner. Plays a role as coinhibitory receptor in immune response, insulin action and also functions as an activator during angiogenesis. Its coinhibitory receptor function is phosphorylation- and PTPN6 -dependent, which in turn, suppress signal transduction of associated receptors by dephosphorylation of their downstream effectors. Plays a role in immune response, of T cells, natural killer (NK) and neutrophils. Upon TCR/CD3 complex stimulation, inhibits TCR-mediated cytotoxicity by blocking granule exocytosis by mediating homophilic binding to adjacent cells, allowing interaction with and phosphorylation by LCK and interaction with the TCR/CD3 complex which recruits PTPN6 resulting in dephosphorylation of CD247 and ZAP70. Also inhibits T cell proliferation and cytokine production through inhibition of JNK cascade and plays a crucial role in regulating autoimmunity and anti-tumor immunity by inhibiting T cell through its interaction with HAVCR2. Upon natural killer (NK) cells activation, inhibit KLRK1-mediated cytolysis of CEACAM1-bearing tumor cells by trans-homophilic interactions with CEACAM1 on the target cell and lead to cis-interaction between CEACAM1 and KLRK1, allowing PTPN6 recruitment and then VAV1 dephosphorylation. Upon neutrophils activation negatively regulates IL1B production by recruiting PTPN6 to a SYK-TLR4-CEACAM1 complex, that dephosphorylates SYK, reducing the production of reactive oxygen species (ROS) and lysosome disruption, which in turn, reduces the activity of the inflammasome. Down-regulates neutrophil production by acting as a coinhibitory receptor for CSF3R by down-regulating the CSF3R-STAT3 pathway through recruitment of PTPN6 that dephosphorylates CSF3R. Also regulates insulin action by promoting INS clearance and regulating lipogenesis in liver through regulating insulin signaling. Upon INS stimulation, undergoes phosphorylation by INSR leading to INS clearance by increasing receptor-mediated insulin endocytosis. This inernalization promotes interaction with FASN leading to receptor-mediated insulin degradation and to reduction of FASN activity leading to negative regulation of fatty acid synthesis. INSR-mediated phosphorylation also provokes a down-regulation of cell proliferation through SHC1 interaction resulting in decrease coupling of SHC1 to the MAPK3/ERK1-MAPK1/ERK2 and phosphatidylinositol 3-kinase pathways. Functions as activator in angiogenesis by promoting blood vessel remodeling through endothelial cell differentiation and migration and in arteriogenesis by increasing the number of collateral arteries and collateral vessel calibers after ischemia. Also regulates vascular permeability through the VEGFR2 signaling pathway resulting in control of nitric oxide production. Down-regulates cell growth in response to EGF through its interaction with SHC1 that mediates interaction with EGFR resulting in decrease coupling of SHC1 to the MAPK3/ERK1-MAPK1/ERK2 pathway. Negatively regulates platelet aggregation by decreasing platelet adhesion on type I collagen through the GPVI-FcRgamma complex. Inhibits cell migration and cell scattering through interaction with FLNA; interferes with the interaction of FLNA with RALA. Mediates bile acid transport activity in a phosphorylation dependent manner. Negatively regulates osteoclastogenesis. Functionally, cell adhesion protein that mediates homophilic cell adhesion in a calcium-independent manner. Promotes populations of T cells regulating IgA production and secretion associated with control of the commensal microbiota and resistance to enteropathogens. This Homo sapiens (Human) protein is Cell adhesion molecule CEACAM1.